The sequence spans 434 residues: GTPase Obg (434 aa).

An Obg domain is found at 1–158 (MFLDTAKIKV…RELQLELKIL (158 aa)). The region spanning 159-336 (ADVGLVGFPS…LLDATAELLD (178 aa)) is the OBG-type G domain. Residues 165-172 (GFPSVGKS), 190-194 (FTTIV), 212-215 (DLPG), 282-285 (NKMD), and 317-319 (SGL) contribute to the GTP site. Mg(2+)-binding residues include Ser-172 and Thr-192. The OCT domain occupies 356–434 (GFDEEEKAFE…IGKFEFEFVD (79 aa)).

It belongs to the TRAFAC class OBG-HflX-like GTPase superfamily. OBG GTPase family. As to quaternary structure, monomer. Mg(2+) is required as a cofactor.

Its subcellular location is the cytoplasm. Its function is as follows. An essential GTPase which binds GTP, GDP and possibly (p)ppGpp with moderate affinity, with high nucleotide exchange rates and a fairly low GTP hydrolysis rate. Plays a role in control of the cell cycle, stress response, ribosome biogenesis and in those bacteria that undergo differentiation, in morphogenesis control. In Streptococcus pneumoniae serotype 19F (strain G54), this protein is GTPase Obg.